A 62-amino-acid polypeptide reads, in one-letter code: Photosystem II reaction center protein Z (62 aa).

Transmembrane regions (helical) follow at residues 8 to 28 (AVFA…AVFA) and 41 to 61 (FSGA…NSSV).

Belongs to the PsbZ family. PSII is composed of 1 copy each of membrane proteins PsbA, PsbB, PsbC, PsbD, PsbE, PsbF, PsbH, PsbI, PsbJ, PsbK, PsbL, PsbM, PsbT, PsbY, PsbZ, Psb30/Ycf12, at least 3 peripheral proteins of the oxygen-evolving complex and a large number of cofactors. It forms dimeric complexes.

Its subcellular location is the plastid. It is found in the chloroplast thylakoid membrane. May control the interaction of photosystem II (PSII) cores with the light-harvesting antenna, regulates electron flow through the 2 photosystem reaction centers. PSII is a light-driven water plastoquinone oxidoreductase, using light energy to abstract electrons from H(2)O, generating a proton gradient subsequently used for ATP formation. In Selaginella uncinata (Blue spike-moss), this protein is Photosystem II reaction center protein Z.